A 475-amino-acid polypeptide reads, in one-letter code: L-seryl-tRNA(Sec) selenium transferase (475 aa).

Lys295 is modified (N6-(pyridoxal phosphate)lysine).

This sequence belongs to the SelA family. Pyridoxal 5'-phosphate serves as cofactor.

Its subcellular location is the cytoplasm. It catalyses the reaction L-seryl-tRNA(Sec) + selenophosphate + H(+) = L-selenocysteinyl-tRNA(Sec) + phosphate. It functions in the pathway aminoacyl-tRNA biosynthesis; selenocysteinyl-tRNA(Sec) biosynthesis; selenocysteinyl-tRNA(Sec) from L-seryl-tRNA(Sec) (bacterial route): step 1/1. Functionally, converts seryl-tRNA(Sec) to selenocysteinyl-tRNA(Sec) required for selenoprotein biosynthesis. In Desulfovibrio desulfuricans (strain ATCC 27774 / DSM 6949 / MB), this protein is L-seryl-tRNA(Sec) selenium transferase.